A 553-amino-acid polypeptide reads, in one-letter code: Major facilitator-type transporter hxnZ (553 aa).

5 helical membrane passes run 89–109, 128–148, 152–172, 174–194, and 213–233; these read FTVA…ISAV, VAYY…SDLI, PAFN…AGTS, FIAF…NVVC, and ALSG…WVFL. A glycan (N-linked (GlcNAc...) asparagine) is linked at asparagine 235. Helical transmembrane passes span 257 to 277, 366 to 386, 409 to 429, 433 to 453, 459 to 481, 496 to 516, and 525 to 545; these read YTLI…IFVF, ALIW…FNFL, IQSA…NTFL, WMMG…VGVK, LAFS…YAIM, TASG…SLIA, and PIYA…GLPF.

Belongs to the major facilitator superfamily.

It is found in the cell membrane. Major facilitator-type transporter, part of the hnx cluster involved in the purine degradation. The nicotinate hydroxylase hnxS accepts nicotinate as a substrate and catalyzes the first step of nicotinate catabolism. The major facilitator-type transporters hxnP and hxnZ are probably involved in the uptake of nicotinate-derived metabolites, and the oxidoreductases hxnT and hxnY in the further metabolism of 6-OH nicotinic acid. This chain is Major facilitator-type transporter hxnZ, found in Emericella nidulans (strain FGSC A4 / ATCC 38163 / CBS 112.46 / NRRL 194 / M139) (Aspergillus nidulans).